The chain runs to 371 residues: Aminomethyltransferase (371 aa).

Belongs to the GcvT family. As to quaternary structure, the glycine cleavage system is composed of four proteins: P, T, L and H.

It carries out the reaction N(6)-[(R)-S(8)-aminomethyldihydrolipoyl]-L-lysyl-[protein] + (6S)-5,6,7,8-tetrahydrofolate = N(6)-[(R)-dihydrolipoyl]-L-lysyl-[protein] + (6R)-5,10-methylene-5,6,7,8-tetrahydrofolate + NH4(+). In terms of biological role, the glycine cleavage system catalyzes the degradation of glycine. This chain is Aminomethyltransferase, found in Oceanobacillus iheyensis (strain DSM 14371 / CIP 107618 / JCM 11309 / KCTC 3954 / HTE831).